Reading from the N-terminus, the 391-residue chain is BRCA1-A complex subunit Abraxas 1 (391 aa).

The MPN domain maps to 8–156; sequence VRISGFVLSS…THRLEFSAFI (149 aa). A coiled-coil region spans residues 223 to 261; the sequence is LLAEMQKVCVEVEKSERTVEKLQEDIAQLKEAIGKQKTH. The disordered stretch occupies residues 354–391; sequence QRLKRKRKTREVSESASESGSDTEIEMNGQSGSNSPVF. The span at 367 to 391 shows a compositional bias: polar residues; that stretch reads ESASESGSDTEIEMNGQSGSNSPVF. A Phosphoserine modification is found at Ser-388. Positions 388 to 391 match the pSXXF motif motif; that stretch reads SPVF.

Belongs to the FAM175 family. Abraxas subfamily. As to quaternary structure, component of the ARISC complex. Component of the BRCA1-A complex. Homodimer. In terms of processing, phosphorylation of Ser-388 of the pSXXF motif by ATM or ATR constitutes a specific recognition motif for the BRCT domain of BRCA1.

The protein resides in the nucleus. Functionally, involved in DNA damage response and double-strand break (DSB) repair. Component of the BRCA1-A complex, acting as a central scaffold protein that assembles the various components of the complex. The BRCA1-A complex specifically recognizes 'Lys-63'-linked ubiquitinated histones H2A and H2AX at DNA lesion sites. This complex also possesses deubiquitinase activity that specifically removes 'Lys-63'-linked ubiquitin on histones H2A and H2AX. This is BRCA1-A complex subunit Abraxas 1 from Danio rerio (Zebrafish).